We begin with the raw amino-acid sequence, 237 residues long: UPF0688 protein C1orf174 homolog (237 aa).

Residues 1–187 form a disordered region; the sequence is MRSRKLAGGV…LLDDDSNQPM (187 aa). Over residues 11-28 the composition is skewed to low complexity; it reads RSSARLRARSCSAASASA. The segment covering 29–47 has biased composition (polar residues); that stretch reads QDTHVTTSAQTACQTPSSH. The span at 48–76 shows a compositional bias: basic and acidic residues; the sequence is KATDRRTSKKFKYDKGHIVKSELQKHRSD. At serine 183 the chain carries Phosphoserine.

This sequence belongs to the UPF0688 family.

Its subcellular location is the nucleus. In Bos taurus (Bovine), this protein is UPF0688 protein C1orf174 homolog.